We begin with the raw amino-acid sequence, 347 residues long: GMP reductase (347 aa).

Asparagine 108–alanine 131 serves as a coordination point for NADP(+). K(+)-binding residues include glycine 181 and glycine 183. The active-site Thioimidate intermediate is the cysteine 186. Isoleucine 216–valine 239 serves as a coordination point for NADP(+).

Belongs to the IMPDH/GMPR family. GuaC type 1 subfamily. In terms of assembly, homotetramer.

The enzyme catalyses IMP + NH4(+) + NADP(+) = GMP + NADPH + 2 H(+). Functionally, catalyzes the irreversible NADPH-dependent deamination of GMP to IMP. It functions in the conversion of nucleobase, nucleoside and nucleotide derivatives of G to A nucleotides, and in maintaining the intracellular balance of A and G nucleotides. This chain is GMP reductase, found in Tolumonas auensis (strain DSM 9187 / NBRC 110442 / TA 4).